Here is a 147-residue protein sequence, read N- to C-terminus: Acireductone dioxygenase (147 aa).

Residues histidine 74, histidine 76, glutamate 80, and histidine 119 each coordinate Fe(2+). Histidine 74, histidine 76, glutamate 80, and histidine 119 together coordinate Ni(2+).

Belongs to the acireductone dioxygenase (ARD) family. The cofactor is Fe(2+). Ni(2+) serves as cofactor.

The protein resides in the cytoplasm. Its subcellular location is the nucleus. The catalysed reaction is 1,2-dihydroxy-5-(methylsulfanyl)pent-1-en-3-one + O2 = 4-methylsulfanyl-2-oxobutanoate + formate + 2 H(+). The enzyme catalyses 1,2-dihydroxy-5-(methylsulfanyl)pent-1-en-3-one + O2 = 3-(methylsulfanyl)propanoate + CO + formate + 2 H(+). It participates in amino-acid biosynthesis; L-methionine biosynthesis via salvage pathway; L-methionine from S-methyl-5-thio-alpha-D-ribose 1-phosphate: step 5/6. Functionally, catalyzes 2 different reactions between oxygen and the acireductone 1,2-dihydroxy-3-keto-5-methylthiopentene (DHK-MTPene) depending upon the metal bound in the active site. Fe-containing acireductone dioxygenase (Fe-ARD) produces formate and 2-keto-4-methylthiobutyrate (KMTB), the alpha-ketoacid precursor of methionine in the methionine recycle pathway. Ni-containing acireductone dioxygenase (Ni-ARD) produces methylthiopropionate, carbon monoxide and formate, and does not lie on the methionine recycle pathway. In Dictyostelium discoideum (Social amoeba), this protein is Acireductone dioxygenase (adi1).